Reading from the N-terminus, the 398-residue chain is Enoyl-[acyl-carrier-protein] reductase [NADH] (398 aa).

NAD(+) is bound by residues 48–53 (GSSTGY), 74–75 (FE), 111–112 (DA), and 139–140 (LA). Position 225 (tyrosine 225) interacts with substrate. The Proton donor role is filled by tyrosine 235. Residues lysine 244 and 273–275 (VVT) contribute to the NAD(+) site.

The protein belongs to the TER reductase family. As to quaternary structure, monomer.

The enzyme catalyses a 2,3-saturated acyl-[ACP] + NAD(+) = a (2E)-enoyl-[ACP] + NADH + H(+). It participates in lipid metabolism; fatty acid biosynthesis. Involved in the final reduction of the elongation cycle of fatty acid synthesis (FAS II). Catalyzes the reduction of a carbon-carbon double bond in an enoyl moiety that is covalently linked to an acyl carrier protein (ACP). In Pseudomonas paraeruginosa (strain DSM 24068 / PA7) (Pseudomonas aeruginosa (strain PA7)), this protein is Enoyl-[acyl-carrier-protein] reductase [NADH].